The primary structure comprises 402 residues: Dynactin subunit 2 (402 aa).

The disordered stretch occupies residues M1–D24. A2 carries the post-translational modification N-acetylalanine. Phosphotyrosine is present on Y6. At S83 the chain carries Phosphoserine. Position 86 is a phosphotyrosine (Y86). A coiled-coil region spans residues Q100 to E130. A phosphothreonine mark is found at T134 and T199. The interval K185–L205 is disordered. Residues E215–N247 are a coiled coil. S321 carries the post-translational modification Phosphoserine.

This sequence belongs to the dynactin subunit 2 family. In terms of assembly, subunit of dynactin, a multiprotein complex part of a tripartite complex with dynein and a adapter, such as BICDL1, BICD2 or HOOK3. The dynactin complex is built around ACTR1A/ACTB filament and consists of an actin-related filament composed of a shoulder domain, a pointed end and a barbed end. Its length is defined by its flexible shoulder domain. The soulder is composed of 2 DCTN1 subunits, 4 DCTN2 and 2 DCTN3. The 4 DCNT2 (via N-terminus) bind the ACTR1A filament and act as molecular rulers to determine the length. The pointed end is important for binding dynein-dynactin cargo adapters and consists of 4 subunits: ACTR10, DCNT4, DCTN5 and DCTN6. The barbed end is composed of a CAPZA1:CAPZB heterodimers, which binds ACTR1A/ACTB filament and dynactin and stabilizes dynactin. Interacts with BICD2 and CEP135. Interacts with DYNAP. Interacts with ECPAS. Interacts with MAPRE1.

Its subcellular location is the cytoplasm. The protein resides in the cytoskeleton. It localises to the microtubule organizing center. It is found in the centrosome. The protein localises to the membrane. Its function is as follows. Part of the dynactin complex that activates the molecular motor dynein for ultra-processive transport along microtubules. In the dynactin soulder domain, binds the ACTR1A filament and acts as a molecular ruler to determine the length. Modulates cytoplasmic dynein binding to an organelle, and plays a role in prometaphase chromosome alignment and spindle organization during mitosis. Involved in anchoring microtubules to centrosomes. May play a role in synapse formation during brain development. This is Dynactin subunit 2 (Dctn2) from Rattus norvegicus (Rat).